A 639-amino-acid polypeptide reads, in one-letter code: Polyvinylalcohol dehydrogenase (639 aa).

Residues 1–33 form the signal peptide; it reads MQQNIERNQVSMTTSRFVWGAVMALVALGSASA. One can recognise a Cytochrome c domain in the interval 36 to 152; the sequence is LNLPDGAALY…TPDQWNGWGA (117 aa). Heme contacts are provided by cysteine 49, cysteine 52, and histidine 53.

It belongs to the bacterial PQQ dehydrogenase family. As to quaternary structure, monomer. Requires pyrroloquinoline quinone as cofactor.

It localises to the cytoplasm. It carries out the reaction a polyvinyl alcohol + 2n Fe(III)-[cytochrome c] = an oxidized polyvinyl alcohol + 2n Fe(II)-[cytochrome c] + 2n H(+). Catalyzes the oxidation of polyvinyl alcohol (PVA) in the polyvinyl alcohol degradation pathway. The protein is Polyvinylalcohol dehydrogenase (pvaA) of Pseudomonas sp.